The sequence spans 635 residues: BTB/POZ domain and ankyrin repeat-containing protein NPR2 (635 aa).

Positions 97 to 191 (SDADVDVADG…LYTGKLRPAP (95 aa)) constitute a BTB domain. Over residues 138–152 (AAGGGGGGGGGGGER) the composition is skewed to gly residues. Positions 138–157 (AAGGGGGGGGGGGERTGGRP) are disordered. The segment at 194-208 (VVSCADPMCPHDSCP) adopts a C2HC NPR-type zinc-finger fold. 4 residues coordinate Zn(2+): Cys197, Cys202, His204, and Cys207. ANK repeat units follow at residues 317–347 (KRVR…TLDD), 349–376 (NALH…NLNL), and 380–409 (RGYT…AVSQ). The tract at residues 439-576 (ESNKDRLCID…FLEDDLPDSP (138 aa)) is salicylic acid-binding core (SBC). Arg484 contributes to the salicylate binding site.

The protein belongs to the plant 'ANKYRIN-BTB/POZ' family. 'NPR1-like' subfamily. Interacts with NRR. Interacts with TGAL1 and TGAL11.

Its subcellular location is the nucleus. Its pathway is protein modification; protein ubiquitination. In terms of biological role, salicylic acid (SA)-binding substrate-specific adapter of an E3 ubiquitin-protein ligase complex (CUL3-RBX1-BTB) which mediates the ubiquitination and subsequent proteasomal degradation of target proteins. May be involved in regulating basal defense responses against pathogens, and may be involved in crosstalk between SA- and JA-dependent signaling pathways. Does not seem to be involved in defense response against the bacterial blight disease caused by Xanthomonas oryzae pv. oryzae (Xoo). Over-expression of NPR2/NH2 does not confer disease resistance to Xoo. This is BTB/POZ domain and ankyrin repeat-containing protein NPR2 from Oryza sativa subsp. japonica (Rice).